Here is a 702-residue protein sequence, read N- to C-terminus: Elongation factor G (702 aa).

Residues 8–290 (ERYRNIGISA…AVIDYLPSPV (283 aa)) enclose the tr-type G domain. Residues 17-24 (AHIDAGKT), 88-92 (DTPGH), and 142-145 (NKMD) each bind GTP.

The protein belongs to the TRAFAC class translation factor GTPase superfamily. Classic translation factor GTPase family. EF-G/EF-2 subfamily.

The protein localises to the cytoplasm. Its function is as follows. Catalyzes the GTP-dependent ribosomal translocation step during translation elongation. During this step, the ribosome changes from the pre-translocational (PRE) to the post-translocational (POST) state as the newly formed A-site-bound peptidyl-tRNA and P-site-bound deacylated tRNA move to the P and E sites, respectively. Catalyzes the coordinated movement of the two tRNA molecules, the mRNA and conformational changes in the ribosome. In Acidovorax ebreus (strain TPSY) (Diaphorobacter sp. (strain TPSY)), this protein is Elongation factor G.